A 1021-amino-acid polypeptide reads, in one-letter code: Replication factor C subunit 1 (1021 aa).

Disordered stretches follow at residues 1–259 (MSSD…EGAP) and 339–392 (PAKA…GSAS). Basic and acidic residues predominate over residues 90-110 (KVSDELEDDMKPLPAKEVHKE). Over residues 123 to 138 (SKRKTPVKPPPSKKLK) the composition is skewed to basic residues. The segment covering 197–207 (LDDDGEEDKMD) has biased composition (acidic residues). The segment covering 219-236 (RGRGGASGGRGRGGGGRG) has biased composition (gly residues). Basic and acidic residues-rich tracts occupy residues 241–255 (GERKDPPHKGEKEVP) and 347–357 (HQSDKNSEKQQ). The 91-residue stretch at 257–347 (GAPDCLTGLT…KPAKATVAKH (91 aa)) folds into the BRCT domain. A compositionally biased stretch (polar residues) spans 374–392 (NQITTGKNISPKSNKGSAS). Position 465 to 472 (465 to 472 (SGPPGIGK)) interacts with ATP. Residues 931-1021 (VGESLPEENG…AGGSGGKRKR (91 aa)) form a disordered region. Residues 945 to 958 (EGDEEDSSDAENND) are compositionally biased toward acidic residues. A compositionally biased stretch (basic and acidic residues) spans 965–977 (TKPKLDLQSDKKK). Residues 999–1010 (AGRSKASGSAGK) show a composition bias toward low complexity. Over residues 1011-1021 (AAGGSGGKRKR) the composition is skewed to gly residues.

The protein belongs to the activator 1 large subunit family. Heterotetramer of subunits RFC2, RFC3, RFC4 and RFC5 that can form a complex with RFC1. Expressed in roots, leaves, shoot apical meristem (SAM), flag leaves and panicles.

The protein localises to the nucleus. Functionally, may be involved in DNA replication and thus regulate cell proliferation. The sequence is that of Replication factor C subunit 1 (RFC1) from Oryza sativa subsp. japonica (Rice).